Consider the following 189-residue polypeptide: Peptidyl-tRNA hydrolase (189 aa).

Position 15 (tyrosine 15) interacts with tRNA. The active-site Proton acceptor is histidine 20. TRNA contacts are provided by tyrosine 65, asparagine 67, and asparagine 113.

It belongs to the PTH family. In terms of assembly, monomer.

The protein localises to the cytoplasm. It catalyses the reaction an N-acyl-L-alpha-aminoacyl-tRNA + H2O = an N-acyl-L-amino acid + a tRNA + H(+). Hydrolyzes ribosome-free peptidyl-tRNAs (with 1 or more amino acids incorporated), which drop off the ribosome during protein synthesis, or as a result of ribosome stalling. Functionally, catalyzes the release of premature peptidyl moieties from peptidyl-tRNA molecules trapped in stalled 50S ribosomal subunits, and thus maintains levels of free tRNAs and 50S ribosomes. The sequence is that of Peptidyl-tRNA hydrolase from Caldicellulosiruptor bescii (strain ATCC BAA-1888 / DSM 6725 / KCTC 15123 / Z-1320) (Anaerocellum thermophilum).